The following is a 183-amino-acid chain: Ribosome rescue factor SmrB (183 aa).

In terms of domain architecture, Smr spans 98 to 173; sequence LDLHGLTQLQ…GDAALLVLIE (76 aa).

Belongs to the SmrB family. In terms of assembly, associates with collided ribosomes, but not with correctly translating polysomes.

Its function is as follows. Acts as a ribosome collision sensor. Detects stalled/collided disomes (pairs of ribosomes where the leading ribosome is stalled and a second ribosome has collided with it) and endonucleolytically cleaves mRNA at the 5' boundary of the stalled ribosome. Stalled/collided disomes form a new interface (primarily via the 30S subunits) that binds SmrB. Cleaved mRNA becomes available for tmRNA ligation, leading to ribosomal subunit dissociation and rescue of stalled ribosomes. This is Ribosome rescue factor SmrB from Salmonella agona (strain SL483).